The chain runs to 373 residues: tRNA-specific 2-thiouridylase MnmA (373 aa).

ATP contacts are provided by residues 12–19 (GMSGGVDS) and Met38. The interaction with target base in tRNA stretch occupies residues 98–100 (NPD). Cys103 functions as the Nucleophile in the catalytic mechanism. A disulfide bridge links Cys103 with Cys200. Gly127 is an ATP binding site. Positions 150–152 (KDQ) are interaction with tRNA. The Cysteine persulfide intermediate role is filled by Cys200. Positions 312–313 (RY) are interaction with tRNA.

It belongs to the MnmA/TRMU family.

Its subcellular location is the cytoplasm. It catalyses the reaction S-sulfanyl-L-cysteinyl-[protein] + uridine(34) in tRNA + AH2 + ATP = 2-thiouridine(34) in tRNA + L-cysteinyl-[protein] + A + AMP + diphosphate + H(+). Functionally, catalyzes the 2-thiolation of uridine at the wobble position (U34) of tRNA, leading to the formation of s(2)U34. The sequence is that of tRNA-specific 2-thiouridylase MnmA from Streptococcus thermophilus (strain CNRZ 1066).